A 695-amino-acid chain; its full sequence is IQ domain-containing protein E (695 aa).

The segment at 29–55 (KAKRKAFHKPPPTSPKSPYLSKPRKVA) is disordered. 3 coiled-coil regions span residues 157 to 264 (LHVQ…RLQT), 292 to 358 (SALL…SSKS), and 387 to 477 (NKDH…CPEV). Ser-322 bears the Phosphoserine mark. 4 disordered regions span residues 357 to 390 (KSHA…NKDH), 465 to 521 (EMKK…RRDA), 564 to 599 (ASKA…TGSP), and 618 to 695 (RARH…NFPV). The segment covering 465 to 482 (EMKKEEKEDCPEVPHKAQ) has biased composition (basic and acidic residues). IQ domains lie at 542–571 (LDEA…HGSE) and 601–630 (QEEA…RTTT).

As to quaternary structure, component of the EvC complex composed of EFCAB7, IQCE, EVC2 and EVC; built from two subcomplexes, EVC2:EVC and EFCAB7:IQCE. Interacts (via N-terminus) with EFCAB7 (via EF-hands 1 and 2); this interaction anchors the EVC-EVC2 complex in a signaling microdomain at the base of cilia and stimulates the Hedgehog (Hh) pathway. Interacts with EVC2 (via N-terminal end). Interacts with EVC.

Its subcellular location is the cell projection. The protein resides in the cilium membrane. Its function is as follows. Component of the EvC complex that positively regulates ciliary Hedgehog (Hh) signaling. Required for proper limb morphogenesis. In Homo sapiens (Human), this protein is IQ domain-containing protein E (IQCE).